Here is a 403-residue protein sequence, read N- to C-terminus: Glycerophosphocholine acyltransferase 1 (403 aa).

Topologically, residues 1–112 (MDHLEFDENT…SGKVVRFRDK (112 aa)) are cytoplasmic. Residues 113 to 133 (LSFALGVSTCILTALLVGMAP) form a helical membrane-spanning segment. Over 134-137 (ESMH) the chain is Lumenal. The helical transmembrane segment at 138–155 (LWYTIQLFVYLPLRYYTY) threads the bilayer. The Cytoplasmic portion of the chain corresponds to 156-161 (QRKGYE). A helical membrane pass occupies residues 162-182 (YFIADFCYWGNILLLVYIWIF). The Lumenal segment spans residues 183–186 (PESR). Residues 187-207 (RLFILSYSISYGTLAWSVVAW) traverse the membrane as a helical segment. The Cytoplasmic portion of the chain corresponds to 208–218 (RNSLLFHSIDK). Residues 219–239 (ITSLFIHFFPPLVLHTIVHLT) traverse the membrane as a helical segment. Asn-240 is a glycosylation site (N-linked (GlcNAc...) asparagine). Over 240-262 (NKSYLKDRFPAVLKVKKIDLLSS) the chain is Lumenal. The chain crosses the membrane as a helical span at residues 263–283 (VEIASFFYALWQIWYYFFIQV). The Cytoplasmic portion of the chain corresponds to 284–322 (GKQKQIQEGRPTSFTWLSKAYSKTKLGRAVAKLPQNLQP). The chain crosses the membrane as a helical span at residues 323–343 (FVFMIIQYLYSITTMLPCSLW). Residues 344-352 (YNNKLYSTA) are Lumenal-facing. Residues 353–373 (FLALIFGWSVWNGASYYIDVF) traverse the membrane as a helical segment. Residues 374–403 (GRRFQKELEALRQQLAETPTNSGSSSALSR) are Cytoplasmic-facing.

This sequence belongs to the GPC1 family.

The protein resides in the endoplasmic reticulum membrane. It is found in the golgi apparatus membrane. It carries out the reaction sn-glycerol 3-phosphocholine + an acyl-CoA = a 1-acyl-sn-glycero-3-phosphocholine + CoA. It catalyses the reaction sn-glycero-3-phosphoethanolamine + an acyl-CoA = a monoacyl-sn-glycero-3-phosphoethanolamine + CoA. The catalysed reaction is sn-glycero-3-phosphoethanolamine + (9Z)-octadecenoyl-CoA = (9Z-octadecenoyl)-sn-glycero-3-phosphoethanolamine + CoA. In terms of biological role, glycerophosphocholine acyltransferase (GPCAT) that utilizes acyl-CoA to acylate glycero-3-phosphocholine (GPC), forming lysophosphatidylcholine (LPC). Shows broad acyl specificities with a preference for 16:0-CoA, polyunsaturated acyl-CoA, and the hydroxylated ricinoleoyl-CoA. Also catalyzes the acylation of glycero-3-phosphoethanolamine (GPE) with acyl-CoA. In addition to acyl-CoA, GPCAT efficiently utilizes LPC and lysophosphatidylethanolamine (LPE) as acyl donors in the acylation of GPC. Contributes to the maintenance of phosphatidylcholine (PC) homeostasis and might also have specific functions in acyl editing of PC, such as transferring acyl groups modified at the sn-2 position of PC to the sn-1. In Schizosaccharomyces pombe (strain 972 / ATCC 24843) (Fission yeast), this protein is Glycerophosphocholine acyltransferase 1.